Reading from the N-terminus, the 178-residue chain is Germinal center-associated signaling and motility protein (178 aa).

Phosphoserine is present on Ser99. Tyr148 bears the Phosphotyrosine mark.

As to quaternary structure, interacts with ACTB and MYH2; the interaction with MYH2 is increased by IL6-induced phosphorylation. Interacts (via C-terminus) with ARHGEF11 (via DH domain). Interacts with ARHGEF12. Interacts with SYK; the interaction increases after B-cell receptor stimulation, resulting in enhanced SYK autophosphorylation and activity. Phosphorylation on tyrosine residues can be induced by IL6. Phosphorylation is mediated by LYN. In terms of processing, targeted by the ubiquitin E3 ligase subunit FBXO10 to mediate its ubiquitination and degradation. In terms of tissue distribution, expressed in diffuse large B-cell lymphoma (DLBCL) and several germinal center (GC)-like lymphoma cell lines (at protein level). Highly expressed in normal GC lymphocytes and GC-derived malignancies. Expressed in thymus and spleen.

The protein resides in the cytoplasm. It is found in the cell membrane. Functionally, involved in the negative regulation of lymphocyte motility. It mediates the migration-inhibitory effects of IL6. Serves as a positive regulator of the RhoA signaling pathway. Enhancement of RhoA activation results in inhibition of lymphocyte and lymphoma cell motility by activation of its downstream effector ROCK. Is a regulator of B-cell receptor signaling, that acts through SYK kinase activation. The protein is Germinal center-associated signaling and motility protein (GCSAM) of Homo sapiens (Human).